The sequence spans 732 residues: Small conductance calcium-activated potassium channel protein 3 (732 aa).

The span at 1–11 shows a compositional bias: basic and acidic residues; sequence MDTSGHFHDSG. Disordered regions lie at residues 1–82 and 103–162; these read MDTS…QQAP and HSSP…ASPL. Residues 35–59 show a composition bias toward pro residues; sequence QPPPPSAPPAVPQQPPGPLLQPQPP. The segment covering 60-82 has biased composition (low complexity); it reads QLQQQQQQQQQQQQQQQQQQQAP. Positions 113-133 are enriched in polar residues; that stretch reads NSANSTAILHPSSRQGSQLNL. Residues 139–148 are compositionally biased toward low complexity; that stretch reads GHSPSSTATS. Ser-168 carries the phosphoserine modification. A compositionally biased stretch (polar residues) spans 241–257; the sequence is THNHQHAGTTAGSTTFP. The segment at 241–260 is disordered; the sequence is THNHQHAGTTAGSTTFPKAN. Residues 289–309 form a helical membrane-spanning segment; it reads LIFGMFGIVVMVIETELSWGL. The helical transmembrane segment at 316–336 threads the bilayer; sequence FSLALKCLISLSTIILLGLII. A helical transmembrane segment spans residues 367-387; that stretch reads ISLEMLVCAIHPIPGEYKFFW. The helical transmembrane segment at 406–426 threads the bilayer; the sequence is IILSIPMFLRLYLIARVMLLH. The chain crosses the membrane as a helical span at residues 455 to 475; sequence LMTICPGTVLLVFSISLWIIA. Positions 495–515 form an intramembrane region, pore-forming; it reads FLGAMWLISITFLSIGYGDMV. The helical transmembrane segment at 524–544 threads the bilayer; sequence VCLLTGIMGAGCTALVVAVVA. Residues 562–638 form a calmodulin-binding region; sequence DTQLTKRIKN…LVDLSKMQNV (77 aa). The stretch at 643-670 forms a coiled coil; that stretch reads ITELNDRSEDLEKQIGSLESKLEHLTAS. Residues 704–732 are disordered; the sequence is GTSHAPPSDSPIGISSTSFPTPYTSSSSC. The span at 718 to 732 shows a compositional bias: low complexity; sequence SSTSFPTPYTSSSSC.

Belongs to the potassium channel KCNN family. KCa2.3/KCNN3 subfamily. As to quaternary structure, homodimer. Heteromultimer with KCNN2 or KCNN1; this modulates plasma membrane expression and consequently the small conductance calcium-activated potassium channel activity. The complex is composed of 4 channel subunits each of which binds to a calmodulin subunit which regulates the channel activity through calcium-binding. Interacts with CALM1.

The protein localises to the cell membrane. It is found in the cytoplasm. Its subcellular location is the myofibril. It localises to the sarcomere. The protein resides in the z line. It catalyses the reaction K(+)(in) = K(+)(out). Inhibited by bee venom neurotoxin apamin. In terms of biological role, small conductance calcium-activated potassium channel that mediates the voltage-independent transmembrane transfer of potassium across the cell membrane through a constitutive interaction with calmodulin which binds the intracellular calcium allowing its opening. The current is characterized by a voltage-independent activation, an intracellular calcium concentration increase-dependent activation and a single-channel conductance of 10 picosiemens. Also presents an inwardly rectifying current, thus reducing its already small outward conductance of potassium ions, which is particularly the case when the membrane potential displays positive values, above + 20 mV. Activation is followed by membrane hyperpolarization. Thought to regulate neuronal excitability by contributing to the slow component of synaptic afterhyperpolarization. The sequence is that of Small conductance calcium-activated potassium channel protein 3 from Rattus norvegicus (Rat).